Reading from the N-terminus, the 920-residue chain is Anoctamin-4 (920 aa).

The Cytoplasmic portion of the chain corresponds to 1-323 (METSSSGITN…LYFAWLGWYT (323 aa)). Positions 38 to 64 (KDDDSLLHPGNLTSTSDDASRLEAGGE) are disordered. A helical transmembrane segment spans residues 324–344 (GMLFPAAFIGLFVFLYGVITL). Residues 345 to 389 (DHCQVSKEVCQATDIIMCPVCDKYCPFMRLSDSCVYAKVTHLFDN) are Extracellular-facing. The chain crosses the membrane as a helical span at residues 390-410 (GATVFFAVFMAVWATVFLEFW). Residues 411-470 (KRRRAVIAYDWDLIDWEEEEEEIRPQFEAKYSKKERMNPISGKPEPYQAFADKCSRLIVS) are Cytoplasmic-facing. A helical transmembrane segment spans residues 471–491 (ASGIFFMICVVIAAVFGIVIY). Residues 492 to 512 (RVVTVSTFAAFKWALIRNNSQ) lie on the Extracellular side of the membrane. N-linked (GlcNAc...) asparagine glycosylation occurs at asparagine 509. Residues 513 to 533 (VATTGTAVCINFCIIMLLNVL) form a helical membrane-spanning segment. Residues 534-560 (YEKVALLLTNLEQPRTESEWENSFTLK) are Cytoplasmic-facing. Residues 561-581 (MFLFQFVNLNSSTFYIAFFLG) form a helical membrane-spanning segment. Over 582–680 (RFTGHPGAYL…AYGLFDEYLE (99 aa)) the chain is Extracellular. A helical membrane pass occupies residues 681 to 701 (MILQFGFTTIFVAAFPLAPLL). Residues 702–733 (ALLNNIIEIRLDAYKFVTQWRRPLASRAKDIG) lie on the Cytoplasmic side of the membrane. The chain crosses the membrane as a helical span at residues 734–754 (IWYGILEGIGILSVITNAFVI). The Extracellular portion of the chain corresponds to 755-850 (AITSDFIPRL…QFWHVLAARL (96 aa)). N-linked (GlcNAc...) asparagine glycosylation is found at asparagine 789 and asparagine 802. The helical transmembrane segment at 851 to 871 (AFIIVFEHLVFCIKHLISYLI) threads the bilayer. Residues 872–920 (PDLPKDLRDRMRREKYLIQEMMYEAELERLQKERKERKKNGKAHHNEWP) are Cytoplasmic-facing.

The protein belongs to the anoctamin family.

The protein resides in the cell membrane. The catalysed reaction is a 1,2-diacyl-sn-glycero-3-phospho-L-serine(in) = a 1,2-diacyl-sn-glycero-3-phospho-L-serine(out). It carries out the reaction a beta-D-galactosyl-(1&lt;-&gt;1')-N-acylsphing-4-enine(out) = a beta-D-galactosyl-(1&lt;-&gt;1')-N-acylsphing-4-enine(in). The enzyme catalyses a 1,2-diacyl-sn-glycero-3-phosphocholine(in) = a 1,2-diacyl-sn-glycero-3-phosphocholine(out). Has calcium-dependent phospholipid scramblase activity; scrambles phosphatidylserine, phosphatidylcholine and galactosylceramide. Does not exhibit calcium-activated chloride channel (CaCC) activity. The protein is Anoctamin-4 of Bos taurus (Bovine).